Reading from the N-terminus, the 66-residue chain is Panusin (66 aa).

Residues 1 to 22 (MKTKAVLMLMLLVLVAATLVQG) form the signal peptide. A propeptide spanning residues 23 to 26 (EPEP) is cleaved from the precursor. 3 disulfides stabilise this stretch: Cys-32–Cys-54, Cys-39–Cys-61, and Cys-44–Cys-60. Tyr-65 is modified (tyrosine amide).

Forms dimers and higher-order oligomers. Contains 3 disulfide bonds.

In terms of biological role, antimicrobial peptide. Has antibacterial activity against Gram-positive bacteria S.aureus ATCC 29737 and B.subtilis ATCC 6633 as well as against Gram-negative bacteria E.coli ATCC 10536 and K.pneumoniae ATCC 10031. This is Panusin from Panulirus argus (Caribbean spiny lobster).